The primary structure comprises 146 residues: Glycosylation-dependent cell adhesion molecule 1 (146 aa).

Residues 1–19 form the signal peptide; sequence MKFFTVLLFASLAATSLAA. The tract at residues 25-112 is disordered; it reads DELHLRTQPT…SAATSEGKLT (88 aa). The segment covering 48-60 has biased composition (basic and acidic residues); that stretch reads ISKESTSSKDLSK. S54, S59, and S71 each carry phosphoserine. The span at 74 to 106 shows a compositional bias: polar residues; it reads NVGTESTKPQSQEAQDGLRSGSSQQEETTSAAT.

The protein belongs to the PP3/GlyCAM-1 family. Post-translationally, extensively O-glycosylated. Lymph nodes. Associated with the lumenal surface of the high endothelial venules of peripheral lymph nodes.

Its subcellular location is the cell membrane. Adhesion molecule that accomplishes cell binding by presenting carbohydrate(s) to the lectin domain of L-selectin. The sequence is that of Glycosylation-dependent cell adhesion molecule 1 (Glycam1) from Rattus norvegicus (Rat).